We begin with the raw amino-acid sequence, 553 residues long: Arginine--tRNA ligase (553 aa).

The 'HIGH' region motif lies at 130–140 (ANPTGDLHIGH).

It belongs to the class-I aminoacyl-tRNA synthetase family. As to quaternary structure, monomer.

It localises to the cytoplasm. The enzyme catalyses tRNA(Arg) + L-arginine + ATP = L-arginyl-tRNA(Arg) + AMP + diphosphate. This chain is Arginine--tRNA ligase, found in Staphylococcus aureus (strain bovine RF122 / ET3-1).